The sequence spans 253 residues: MTAPGLPLLRAPNLAVPHAFTTRAGGVSAGPYAGLNLDDRSDDPRPVAENRARLAAALGFAADDFARLNQVHGVQVVHAQAPGFWEGDALVTATPGVLLAIGTADCYPLLLADPEAGVIGAAHAGWKGTVGRIGQRTVEQMVNLGARPERIHAAVGPGICGEQYEVGEDVAAQFRAAGLGEWVLEREGRTHLDLAGANRALLEGAGVGDLWVSGRCSTEADFYSYRRDAGQTGRMWAVIGLPRREGQTGEARA.

The Zn(2+) site is built by histidine 72, cysteine 106, and histidine 123.

It belongs to the purine nucleoside phosphorylase YfiH/LACC1 family. Homodimer. The cofactor is Cu(2+). Requires Zn(2+) as cofactor.

The catalysed reaction is adenosine + phosphate = alpha-D-ribose 1-phosphate + adenine. The enzyme catalyses S-methyl-5'-thioadenosine + phosphate = 5-(methylsulfanyl)-alpha-D-ribose 1-phosphate + adenine. It catalyses the reaction inosine + phosphate = alpha-D-ribose 1-phosphate + hypoxanthine. It carries out the reaction adenosine + H2O + H(+) = inosine + NH4(+). Purine nucleoside enzyme that catalyzes the phosphorolysis of adenosine and inosine nucleosides, yielding D-ribose 1-phosphate and the respective free bases, adenine and hypoxanthine. Also catalyzes the phosphorolysis of S-methyl-5'-thioadenosine into adenine and S-methyl-5-thio-alpha-D-ribose 1-phosphate. Also has adenosine deaminase activity. In Deinococcus radiodurans (strain ATCC 13939 / DSM 20539 / JCM 16871 / CCUG 27074 / LMG 4051 / NBRC 15346 / NCIMB 9279 / VKM B-1422 / R1), this protein is Purine nucleoside phosphorylase DR_1966.